The chain runs to 576 residues: Sulfite reductase [NADPH] hemoprotein beta-component (576 aa).

Residues C434, C440, C479, and C483 each coordinate [4Fe-4S] cluster. C483 contributes to the siroheme binding site.

Belongs to the nitrite and sulfite reductase 4Fe-4S domain family. In terms of assembly, alpha(8)-beta(8). The alpha component is a flavoprotein, the beta component is a hemoprotein. It depends on siroheme as a cofactor. Requires [4Fe-4S] cluster as cofactor.

It carries out the reaction hydrogen sulfide + 3 NADP(+) + 3 H2O = sulfite + 3 NADPH + 4 H(+). Its pathway is sulfur metabolism; hydrogen sulfide biosynthesis; hydrogen sulfide from sulfite (NADPH route): step 1/1. Its function is as follows. Component of the sulfite reductase complex that catalyzes the 6-electron reduction of sulfite to sulfide. This is one of several activities required for the biosynthesis of L-cysteine from sulfate. This Oceanobacillus iheyensis (strain DSM 14371 / CIP 107618 / JCM 11309 / KCTC 3954 / HTE831) protein is Sulfite reductase [NADPH] hemoprotein beta-component.